A 93-amino-acid polypeptide reads, in one-letter code: UPF0728 protein C10orf53 homolog (93 aa).

It belongs to the UPF0728 family.

The polypeptide is UPF0728 protein C10orf53 homolog (Xenopus tropicalis (Western clawed frog)).